Here is a 101-residue protein sequence, read N- to C-terminus: 2-amino-4-ketopentanoate thiolase alpha subunit (101 aa).

This sequence belongs to the OrtA family. As to quaternary structure, heterodimer with OrtB.

The catalysed reaction is D-alanine + acetyl-CoA = (2R)-2-amino-4-oxopentanoate + CoA. Involved in the ornithine fermentation pathway. Catalyzes the thiolytic cleavage of 2-amino-4-ketopentanoate (AKP) with coenzyme A (CoA) to form acetyl-CoA and alanine. It is strictly specific for AKP. This Unknown prokaryotic organism protein is 2-amino-4-ketopentanoate thiolase alpha subunit.